Here is a 238-residue protein sequence, read N- to C-terminus: uncharacterized protein (238 aa).

An S4 RNA-binding domain is found at 1 to 64; the sequence is MRLDKYLSKS…KPKKNVYLML (64 aa). Asp103 functions as the Nucleophile in the catalytic mechanism.

Belongs to the pseudouridine synthase RsuA family.

The enzyme catalyses a uridine in RNA = a pseudouridine in RNA. This is an uncharacterized protein from Aquifex aeolicus (strain VF5).